The chain runs to 363 residues: MISARFSGRQGDFTLDAAFDVPGQGVTALFGPSGCGKTTVLRCMAGLTRLPGGHLVVNGVTWQEGRQITPPHRRAVGYVFQEASLFTHLSVRENLVYGLRRARGPLRISEAEVTQLLGIDPLLRRPTATLSGGERQRVAIGRALLSQPELLLMDEPLSALDRISRDEILPYLERLHASLQMPVILVSHDLSEVERLADTLVLMEAGRVRAAGPIAAMQADPNLPLIHRPDLAAVIEGVVIALDPAYGLSTLQVPGGRIVVPGNLGPIGARRRLRVPATDVSLGRHAPTDTTILNALPAVILGAEAAEGYQITVRLALGASGEGASLLARVSRKSFDLLGFQPGEQVVARLKAMALSAPAQTGG.

Positions 1–230 (MISARFSGRQ…PNLPLIHRPD (230 aa)) constitute an ABC transporter domain. Residue 31 to 38 (GPSGCGKT) participates in ATP binding. The Mop domain maps to 289–359 (DTTILNALPA…LKAMALSAPA (71 aa)).

Belongs to the ABC transporter superfamily. Molybdate importer (TC 3.A.1.8) family. As to quaternary structure, the complex is composed of two ATP-binding proteins (ModC), two transmembrane proteins (ModB) and a solute-binding protein (ModA).

The protein localises to the cell inner membrane. It carries out the reaction molybdate(out) + ATP + H2O = molybdate(in) + ADP + phosphate + H(+). Functionally, part of the ABC transporter complex ModABC involved in molybdenum import. Responsible for energy coupling to the transport system. The protein is Molybdenum import ATP-binding protein ModC of Rhodobacter capsulatus (Rhodopseudomonas capsulata).